Reading from the N-terminus, the 149-residue chain is Large ribosomal subunit protein uL13 (149 aa).

Belongs to the universal ribosomal protein uL13 family. Part of the 50S ribosomal subunit.

In terms of biological role, this protein is one of the early assembly proteins of the 50S ribosomal subunit, although it is not seen to bind rRNA by itself. It is important during the early stages of 50S assembly. The protein is Large ribosomal subunit protein uL13 of Bifidobacterium adolescentis (strain ATCC 15703 / DSM 20083 / NCTC 11814 / E194a).